A 118-amino-acid polypeptide reads, in one-letter code: UPF0125 protein RSc1426 (118 aa).

Belongs to the UPF0125 (RnfH) family.

The sequence is that of UPF0125 protein RSc1426 from Ralstonia nicotianae (strain ATCC BAA-1114 / GMI1000) (Ralstonia solanacearum).